A 370-amino-acid chain; its full sequence is Phospho-2-dehydro-3-deoxyheptonate aldolase, phenylalanine-inhibited (370 aa).

The protein belongs to the class-I DAHP synthase family.

The enzyme catalyses D-erythrose 4-phosphate + phosphoenolpyruvate + H2O = 7-phospho-2-dehydro-3-deoxy-D-arabino-heptonate + phosphate. It functions in the pathway metabolic intermediate biosynthesis; chorismate biosynthesis; chorismate from D-erythrose 4-phosphate and phosphoenolpyruvate: step 1/7. Inhibited by phenyalanine. Functionally, stereospecific condensation of phosphoenolpyruvate (PEP) and D-erythrose-4-phosphate (E4P) giving rise to 3-deoxy-D-arabino-heptulosonate-7-phosphate (DAHP). This chain is Phospho-2-dehydro-3-deoxyheptonate aldolase, phenylalanine-inhibited (ARO3), found in Saccharomyces cerevisiae (strain ATCC 204508 / S288c) (Baker's yeast).